Here is a 354-residue protein sequence, read N- to C-terminus: MKFVDEVKIHVKAGDGGDGAVAWRREKFIPRGGPAGGDGGNGGDVVLEVDPQLSTLLDYRYIREHKARNGEKGSGSDMNGKDGADLVLRVPPGTVVKDAATGEQLCDLGAAGERVVIAKGGRGGLGNMNFASSTNQAPRYAEDGTPGAERDLVLELKLLADVGIVGYPNAGKSTLISRISRARPKIADYPFTTLTPNLGVVGWRERSFVVADIPGLIEGAHAGAGLGHQFLRHVERCRVLIHLVEGANPEPGRAPRADLDAINAELAAYSDELAKKPQIVAVTKIDVPEARAAGVKLQKLLGRRKKPVPVHLVSAVTGEGLDALLDAVGRALFKEARPHRGGGGKKLAKPRARA.

One can recognise an Obg domain in the interval 1 to 159; the sequence is MKFVDEVKIH…RDLVLELKLL (159 aa). An OBG-type G domain is found at 160–333; the sequence is ADVGIVGYPN…LLDAVGRALF (174 aa). Residues 166 to 173, 191 to 195, 212 to 215, 283 to 286, and 314 to 316 each bind GTP; these read GYPNAGKS, FTTLT, DIPG, TKID, and SAV. 2 residues coordinate Mg(2+): Ser-173 and Thr-193.

Belongs to the TRAFAC class OBG-HflX-like GTPase superfamily. OBG GTPase family. As to quaternary structure, monomer. Mg(2+) serves as cofactor.

The protein localises to the cytoplasm. An essential GTPase which binds GTP, GDP and possibly (p)ppGpp with moderate affinity, with high nucleotide exchange rates and a fairly low GTP hydrolysis rate. Plays a role in control of the cell cycle, stress response, ribosome biogenesis and in those bacteria that undergo differentiation, in morphogenesis control. The sequence is that of GTPase Obg from Anaeromyxobacter sp. (strain K).